Here is a 144-residue protein sequence, read N- to C-terminus: Maximins 1/H1 (144 aa).

Positions 1–18 (MNFKYIVAVSFLLASAYA) are cleaved as a signal peptide. Positions 19–43 (RSEENDEQSLSQRDVLEEESLREIR) are excised as a propeptide. Residue asparagine 70 is modified to Asparagine amide. Residues 74 to 123 (TAEEHEVMKRLEAVMRDLDSLDYPEEAAERETRSFNQEEIANLFTKKEKR) constitute a propeptide that is removed on maturation. Leucine amide is present on leucine 143.

The protein belongs to the bombinin family. As to expression, expressed by the skin glands.

The protein resides in the secreted. Functionally, antibacterial peptide with amphipathic alpha-helical structure that has activity against both Gram-positive and Gram-negative bacteria. Also shows antimicrobial activity against the fungus C.albicans, but not against A.flavus nor P.uticale. It has little hemolytic activity. It possess a significant cytotoxicity against tumor cell lines, but does not possess a significant anti-HIV activity. Also shows high spermicidal activity. Its function is as follows. antibacterial peptide with activity against both Gram-positive and Gram-negative bacteria. Also shows antimicrobial activity against the fungus C.albicans. In addition, shows strong hemolytic activity. This Bombina maxima (Giant fire-bellied toad) protein is Maximins 1/H1.